A 379-amino-acid chain; its full sequence is Glutamate 5-kinase (379 aa).

Lys19 is a binding site for ATP. 3 residues coordinate substrate: Ser59, Asp146, and Asn158. Residues 178 to 179 and 220 to 226 each bind ATP; these read TD and TGGMATK. The PUA domain maps to 285–363; the sequence is SGDIIIDDGA…KDIISILGHD (79 aa).

It belongs to the glutamate 5-kinase family.

Its subcellular location is the cytoplasm. It catalyses the reaction L-glutamate + ATP = L-glutamyl 5-phosphate + ADP. The protein operates within amino-acid biosynthesis; L-proline biosynthesis; L-glutamate 5-semialdehyde from L-glutamate: step 1/2. Its function is as follows. Catalyzes the transfer of a phosphate group to glutamate to form L-glutamate 5-phosphate. This Vibrio parahaemolyticus serotype O3:K6 (strain RIMD 2210633) protein is Glutamate 5-kinase.